The primary structure comprises 40 residues: Potassium channel toxin alpha-KTx 12.2 (40 aa).

4 disulfides stabilise this stretch: Cys2-Cys5, Cys10-Cys31, Cys16-Cys36, and Cys20-Cys38.

This sequence belongs to the short scorpion toxin superfamily. Potassium channel inhibitor family. Alpha-KTx 12 subfamily. As to expression, expressed by the venom gland.

The protein localises to the secreted. Its function is as follows. Inhibits high conductance calcium-activated potassium channels. Reversibly inhibits Shaker B potassium channels. The protein is Potassium channel toxin alpha-KTx 12.2 of Tityus trivittatus (Argentinean scorpion).